Here is a 378-residue protein sequence, read N- to C-terminus: Putative glutamate--cysteine ligase 2 (378 aa).

This sequence belongs to the glutamate--cysteine ligase type 2 family. YbdK subfamily.

It carries out the reaction L-cysteine + L-glutamate + ATP = gamma-L-glutamyl-L-cysteine + ADP + phosphate + H(+). Its function is as follows. ATP-dependent carboxylate-amine ligase which exhibits weak glutamate--cysteine ligase activity. The chain is Putative glutamate--cysteine ligase 2 from Pseudomonas paraeruginosa (strain DSM 24068 / PA7) (Pseudomonas aeruginosa (strain PA7)).